Here is a 380-residue protein sequence, read N- to C-terminus: Putative ankyrin repeat protein RF_1306 (380 aa).

ANK repeat units lie at residues 48–76 (NKWS…NINA), 80–109 (KCRT…KIAP), 112–143 (YGWS…KYDK), 170–199 (NNKT…KFDI), 203–233 (LGYK…GKNT), 239–268 (LEKV…GFDK), 270–299 (LGQK…DAQY), 303–333 (LGRS…DINY), and 337–366 (SGLN…YESY).

The chain is Putative ankyrin repeat protein RF_1306 from Rickettsia felis (strain ATCC VR-1525 / URRWXCal2) (Rickettsia azadi).